The primary structure comprises 125 residues: Aldolase FrzH (125 aa).

It carries out the reaction (2S)-3-(4-methoxyphenyl)-2-[(3S)-3-(methylamino)-8-oxo-1-azaspiro[4.5]decan-1-yl]propanal = (1S,3S,6S,7S,8R)-7-hydroxy-6-[(4-methoxyphenyl)methyl]-3-(methylamino)-5-azatricyclo[6.3.1.0(1,5)]dodecan-9-one. It participates in secondary metabolite biosynthesis. In terms of biological role, aldolase; part of the gene cluster that mediates the biosynthesis of the alkaloid (-)-FR901483, a potent immunosuppressant that shows efficacy in animal models and a probable inhibitor of purine nucleotide biosynthesis by targeting phosphoribosylpyrophosphate amidotransferase (PPAT). Within the pathway, FrzH is a new kind of aldolase with no similarities to known aldolases, and which catalyzes the intramolecular aldol condensation via formation of a C9-C3' bond to yield an aza-tricyclic product. The biosynthesis of (-)-FR901483 starts with the condensation of two L-tyrosines to yield (S,S)-dityrosyl-piperazine. This process occurs in 3 steps with the non-canonical nonribosomal peptide synthetase FrzA catalyzing the reduction of L-tyrosine into L-tyrosinal, the spontaneous condensation of 2 L-tyrosinal units, and the subsequent reduction by the NmrA-like family domain-containing oxidoreductase FrzB. The cytochrome P450 monooxygenase FrzC then performs coupling between N10 and C1' to morph the piperazine into a 1,4-diazabicyclo[3.2.1]octane spiro-fused to a 2,5-cyclohexadienone. The dienone portion is further reduced to cyclohexanone by the flavin-dependent reductase FrzD. The methyltranserases (MTs) FrzE and FrzF are then involved in the methylation at the C10' amine and the C4 phenolic oxygen, respectively. The order of the two MTs appear to be interchangeable. Cleavage of the C9-N10' bond by the dioxygenase FrzG then leads to formation of a conjugated iminium. In addition to the oxidation of C9, an additional dehydrogenation between C7 and C8 can occur to give a likely shunt product. The next biosynthetic step is the intramolecular aldol condensation catalyzed by the newly identified aldolase FrzH to yield an aza-tricyclic product with the formation of a C9-C3' bond. The short-chain dehydrogenase/reductase FrzI then produces dephospho-(-)-FR901483 that is phosphorylated at C4'-OH into (-)-FR901483 by the phosphotransferase FrzJ. This Cladobotryum sp protein is Aldolase FrzH.